The primary structure comprises 288 residues: Proteasome subunit beta (288 aa).

Positions 1-60 (MESNADWGSRGGLPQAFLTPGISSFSEFLKGFAPEYLPSGRPLPGGLGSASAAGDIAPHG) are cleaved as a propeptide — removed in mature form; by autocatalysis. The active-site Nucleophile is threonine 61.

It belongs to the peptidase T1B family. As to quaternary structure, the 20S proteasome core is composed of 14 alpha and 14 beta subunits that assemble into four stacked heptameric rings, resulting in a barrel-shaped structure. The two inner rings, each composed of seven catalytic beta subunits, are sandwiched by two outer rings, each composed of seven alpha subunits. The catalytic chamber with the active sites is on the inside of the barrel. Has a gated structure, the ends of the cylinder being occluded by the N-termini of the alpha-subunits. Is capped by the proteasome-associated ATPase, ARC.

Its subcellular location is the cytoplasm. The catalysed reaction is Cleavage of peptide bonds with very broad specificity.. Its pathway is protein degradation; proteasomal Pup-dependent pathway. The formation of the proteasomal ATPase ARC-20S proteasome complex, likely via the docking of the C-termini of ARC into the intersubunit pockets in the alpha-rings, may trigger opening of the gate for substrate entry. Interconversion between the open-gate and close-gate conformations leads to a dynamic regulation of the 20S proteasome proteolysis activity. Component of the proteasome core, a large protease complex with broad specificity involved in protein degradation. This chain is Proteasome subunit beta, found in Catenulispora acidiphila (strain DSM 44928 / JCM 14897 / NBRC 102108 / NRRL B-24433 / ID139908).